A 226-amino-acid polypeptide reads, in one-letter code: Urease accessory protein UreF (226 aa).

The protein belongs to the UreF family. UreD, UreF and UreG form a complex that acts as a GTP-hydrolysis-dependent molecular chaperone, activating the urease apoprotein by helping to assemble the nickel containing metallocenter of UreC. The UreE protein probably delivers the nickel.

It is found in the cytoplasm. Functionally, required for maturation of urease via the functional incorporation of the urease nickel metallocenter. This Corynebacterium glutamicum (strain R) protein is Urease accessory protein UreF.